Consider the following 771-residue polypeptide: Rho guanine nucleotide exchange factor 6 (771 aa).

The Calponin-homology (CH) domain occupies 1 to 111 (MNPEERLVTW…TLLAVNKATE (111 aa)). Positions 115–157 (SERPCGRSSSLSAATSSQTNPQVAVPSTAPEQHSEEKAEMTEN) are disordered. The segment covering 122–131 (SSSLSAATSS) has biased composition (low complexity). S126 bears the Phosphoserine mark. Position 133 is a phosphothreonine (T133). Residues 159-218 (SHQLIVKARFNFKQTNEDELSVCKGDIIYVTRVEEGGWWEGTLNGRTGWFPSNYVREIKP) form the SH3 domain. S224 bears the Phosphoserine mark. Residues 240–420 (YYTVVLQNIL…KTLMGQCQDL (181 aa)) form the DH domain. A PH domain is found at 442–547 (DIKTLGNVIF…WMEQLNRLTK (106 aa)). S487 bears the Phosphoserine mark. Residues 556 to 572 (SKTSSSSCSTHSSFSST) are compositionally biased toward low complexity. Residues 556-580 (SKTSSSSCSTHSSFSSTGQPRGPLE) form a disordered region. A phosphoserine mark is found at S639 and S679.

In terms of assembly, interacts with PAK kinases through the SH3 domain. Interacts with GIT1. Component of cytoplasmic complexes, which also contain PXN, GIT1 and PAK1. Interacts with BIN2. Identified in a complex with BIN2 and GIT2. Interacts with PARVB. Interacts with PARVG; the guanine nucleotide exchange factor activity of ARHGEF6 is essential for PARVG-induced enhancement of cell spreading. In terms of tissue distribution, detected in adult heart, spleen, lung, skeletal muscle, kidney and testis. Detected throughout embryogenesis.

Its subcellular location is the cell projection. It localises to the lamellipodium. Functionally, acts as a RAC1 guanine nucleotide exchange factor (GEF). The polypeptide is Rho guanine nucleotide exchange factor 6 (Arhgef6) (Mus musculus (Mouse)).